A 100-amino-acid polypeptide reads, in one-letter code: Small ribosomal subunit protein uS14c (100 aa).

Belongs to the universal ribosomal protein uS14 family. As to quaternary structure, part of the 30S ribosomal subunit.

The protein localises to the plastid. It localises to the chloroplast. Functionally, binds 16S rRNA, required for the assembly of 30S particles. The protein is Small ribosomal subunit protein uS14c of Phalaenopsis aphrodite subsp. formosana (Moth orchid).